The primary structure comprises 108 residues: MIKTTLLFFATALCEIIGCFLPWLWLKRNASIWLLLPAGISLALFVWLLTLHPAASGRVYAAYGGVYVCTALMWLRVVDGVKLSLYDWTGALIALCGMLIIVAGWGRT.

The Periplasmic portion of the chain corresponds to 1 to 5; that stretch reads MIKTT. Residues 6 to 26 form a helical membrane-spanning segment; the sequence is LLFFATALCEIIGCFLPWLWL. At 27–30 the chain is on the cytoplasmic side; it reads KRNA. A helical membrane pass occupies residues 31 to 51; that stretch reads SIWLLLPAGISLALFVWLLTL. Residues 52–60 lie on the Periplasmic side of the membrane; the sequence is HPAASGRVY. Residues 61–81 form a helical membrane-spanning segment; that stretch reads AAYGGVYVCTALMWLRVVDGV. Residues 82–84 lie on the Cytoplasmic side of the membrane; that stretch reads KLS. The chain crosses the membrane as a helical span at residues 85 to 105; the sequence is LYDWTGALIALCGMLIIVAGW. Residues 106-108 are Periplasmic-facing; the sequence is GRT.

Belongs to the UPF0060 family.

The protein resides in the cell inner membrane. In Shigella flexneri serotype 5b (strain 8401), this protein is UPF0060 membrane protein YnfA.